A 79-amino-acid chain; its full sequence is Short neurotoxin 1/5 (79 aa).

The first 21 residues, 1–21 (MKTLLLTLVMVTIMCLDLGYT), serve as a signal peptide directing secretion. Disulfide bonds link cysteine 24–cysteine 41, cysteine 34–cysteine 59, cysteine 63–cysteine 71, and cysteine 72–cysteine 77.

This sequence belongs to the three-finger toxin family. Short-chain subfamily. Type III alpha-neurotoxin sub-subfamily. Expressed by the venom gland.

Its subcellular location is the secreted. Functionally, binds with high affinity to muscle nicotinic acetylcholine receptor (nAChR) and inhibit acetylcholine from binding to the receptor, thereby impairing neuromuscular transmission. Compete with the binding of alpha-bungarotoxin on muscle AChR (from Torpedo) with an IC(50) of 0.31 uM (SNTX1) and 3.1 uM (SNTX5). Is able of exerting muscle paralysis, spasms and increased respiration. This is Short neurotoxin 1/5 from Pseudonaja textilis (Eastern brown snake).